Consider the following 254-residue polypeptide: uncharacterized protein (254 aa).

The tract at residues 163 to 182 (PNKHTQHKRSTRRTSPKDYN) is disordered. Over residues 166-176 (HTQHKRSTRRT) the composition is skewed to basic residues. Residues 207-227 (AHSAWILIIIIIIIVVILFFF) form a helical membrane-spanning segment.

It belongs to the RL11 family.

It is found in the host membrane. This is an uncharacterized protein from Human cytomegalovirus (strain Merlin) (HHV-5).